Reading from the N-terminus, the 504-residue chain is Maturase K (504 aa).

Belongs to the intron maturase 2 family. MatK subfamily.

It is found in the plastid. The protein localises to the chloroplast. Functionally, usually encoded in the trnK tRNA gene intron. Probably assists in splicing its own and other chloroplast group II introns. The chain is Maturase K from Lablab purpureus (Hyacinth bean).